The primary structure comprises 476 residues: Methylenetetrahydrofolate--tRNA-(uracil-5-)-methyltransferase TrmFO (476 aa).

Residue 13-18 participates in FAD binding; that stretch reads GGGLAG. A disordered region spans residues 425 to 446; the sequence is PPLESPPTHGADGKKLRGPDKT. Over residues 435-446 the composition is skewed to basic and acidic residues; the sequence is ADGKKLRGPDKT.

This sequence belongs to the MnmG family. TrmFO subfamily. The cofactor is FAD.

It localises to the cytoplasm. The enzyme catalyses uridine(54) in tRNA + (6R)-5,10-methylene-5,6,7,8-tetrahydrofolate + NADH + H(+) = 5-methyluridine(54) in tRNA + (6S)-5,6,7,8-tetrahydrofolate + NAD(+). The catalysed reaction is uridine(54) in tRNA + (6R)-5,10-methylene-5,6,7,8-tetrahydrofolate + NADPH + H(+) = 5-methyluridine(54) in tRNA + (6S)-5,6,7,8-tetrahydrofolate + NADP(+). Catalyzes the folate-dependent formation of 5-methyl-uridine at position 54 (M-5-U54) in all tRNAs. The sequence is that of Methylenetetrahydrofolate--tRNA-(uracil-5-)-methyltransferase TrmFO from Rhodopseudomonas palustris (strain BisB18).